Reading from the N-terminus, the 116-residue chain is Large ribosomal subunit protein bL20c (116 aa).

Belongs to the bacterial ribosomal protein bL20 family.

It localises to the plastid. The protein localises to the chloroplast. In terms of biological role, binds directly to 23S ribosomal RNA and is necessary for the in vitro assembly process of the 50S ribosomal subunit. It is not involved in the protein synthesizing functions of that subunit. The chain is Large ribosomal subunit protein bL20c (rpl20) from Marchantia polymorpha (Common liverwort).